Reading from the N-terminus, the 126-residue chain is Fluoride-specific ion channel FluC (126 aa).

4 helical membrane passes run 4–24 (PLLSIALGSVLGAWLRWFLGL), 33–53 (IPLGTVTVNLVGGFIIGFAMA), 67–87 (FVITGFCGALTTFSTFSIEIV), and 97–117 (MAMLAISIHLIGSLIFTCLGL). Na(+)-binding residues include Gly-74 and Thr-77.

Belongs to the fluoride channel Fluc/FEX (TC 1.A.43) family.

The protein resides in the cell inner membrane. The enzyme catalyses fluoride(in) = fluoride(out). With respect to regulation, na(+) is not transported, but it plays an essential structural role and its presence is essential for fluoride channel function. In terms of biological role, fluoride-specific ion channel. Important for reducing fluoride concentration in the cell, thus reducing its toxicity. The protein is Fluoride-specific ion channel FluC of Acinetobacter baumannii (strain ATCC 17978 / DSM 105126 / CIP 53.77 / LMG 1025 / NCDC KC755 / 5377).